We begin with the raw amino-acid sequence, 104 residues long: Replication restart protein PriB (104 aa).

One can recognise an SSB domain in the interval 2 to 101; it reads TNRLVLSGTV…LHAEQIELID (100 aa). The cysteines at positions 48 and 80 are disulfide-linked. Residues 82–89 carry the L45 loop motif; that stretch reads KAKNGLSK.

This sequence belongs to the PriB family. In terms of assembly, homodimer. Primosome assembly occurs via a 'hand-off' mechanism. PriA binds to replication forks, subsequently PriB then DnaT bind; DnaT then displaces ssDNA to generate the helicase loading substrate, which allows DnaC to load helicase DnaB onto the fork. ssDNA is displaced from the PriB-ssDNA complex by DnaT. In a PriA-PriB-replication fork structure, movement of the PriA CRR domain exposes a surface to which PriB binds and contacts ssDNA emerging from the PriA pore. Binds PriA; binding is improved in the presence of ssDNA. Weakly binds DnaT; binding is improved in the presence of ssDNA; as DnaT levels increase PriB dissociates from ssDNA. Component of the replication restart primosome, which is composed of PriA, PriB, PriC, DnaB and DnaT; DnaG primase associates transiently with this complex. Component of the preprimosomal complex composed of one monomer of PriC and DnaT, two monomers of PriA, two dimers of PriB and one hexamer of DnaB. In terms of processing, an intersubunit disulfide bond is seen in some crystals.

In terms of biological role, involved in the restart of stalled replication forks, which reloads the replicative helicase (DnaB) on sites other than the origin of replication; the PriA-PriB pathway is the major replication restart pathway. There are several restart pathways, the PriA-PriB pathway is subdivided into 2 distinct pathways. priB and priC have redundant roles in the cell. During primosome assembly it facilitates complex formation between PriA and DnaT on DNA; stabilizes PriA on DNA, presumably by preventing or inhibiting PriA DNA translocation activity. Forms a branched DNA-PriA-PriB complex when the lagging strand is single-stranded (ss)DNA. Binds ssDNA in the presence and absence of ssDNA DNA-binding protein (SSB), does not bind branched structures. DNA binding, forming spiral filaments on ssDNA, is cooperative. Stimulates the helicase activity of PriA. The homodimer binds 12 nucleotides of ssDNA. Binds homo-pyrimidine tracts better than homo-purine tracts. Its function is as follows. Genetic interactions among priB, dam, lexA, nagC, polA, rdgB, rdgB, rep and uup link the PriA-PriB replication restart pathway to DNA double-strand break repair. This is Replication restart protein PriB from Escherichia coli (strain K12).